The chain runs to 407 residues: MDNVAEMPEEKYVEVDDFLRLAVKFYNTLGIDPYETGRKRTIWFQIYFALNMFNMVFSFYAEVATLVDRLRDNENFLESCILLSYVSFVVMGLSKIGAVMKKKPKMTALVRQLETCFPSPSAKVQEEYAVKSWLKRCHIYTKGFGGLFMIMYFAHALIPLFIYFIQRVLLHYPDAKQIMPFYQLEPWEFRDSWLFYPSYFHQSSAGYTATCGSIAGDLMIFAVVLQVIMHYERLAKVLREFKIQAHNAPNGAKEDIRKLQSLVANHIDILRLTDLMNEVFGIPLLLNFIASALLVCLVGVQLTIALSPEYFCKQMLFLISVLLEVYLLCSFSQRLIDASENVGHAAYDMDWLGSDKRFKKILIFISMRSQKPVCLKATVVLDLSMPTMSIFLGMSYKFFCAVRTMYQ.

Topologically, residues 1-40 (MDNVAEMPEEKYVEVDDFLRLAVKFYNTLGIDPYETGRKR) are cytoplasmic. A helical membrane pass occupies residues 41-61 (TIWFQIYFALNMFNMVFSFYA). Residues 62-79 (EVATLVDRLRDNENFLES) lie on the Extracellular side of the membrane. A helical transmembrane segment spans residues 80-100 (CILLSYVSFVVMGLSKIGAVM). At 101–144 (KKKPKMTALVRQLETCFPSPSAKVQEEYAVKSWLKRCHIYTKGF) the chain is on the cytoplasmic side. Residues 145–165 (GGLFMIMYFAHALIPLFIYFI) form a helical membrane-spanning segment. Over 166 to 208 (QRVLLHYPDAKQIMPFYQLEPWEFRDSWLFYPSYFHQSSAGYT) the chain is Extracellular. Residues 209–229 (ATCGSIAGDLMIFAVVLQVIM) form a helical membrane-spanning segment. The Cytoplasmic segment spans residues 230-278 (HYERLAKVLREFKIQAHNAPNGAKEDIRKLQSLVANHIDILRLTDLMNE). A helical transmembrane segment spans residues 279–300 (VFGIPLLLNFIASALLVCLVGV). Over 301 to 314 (QLTIALSPEYFCKQ) the chain is Extracellular. A helical membrane pass occupies residues 315–331 (MLFLISVLLEVYLLCSF). The Cytoplasmic portion of the chain corresponds to 332–378 (SQRLIDASENVGHAAYDMDWLGSDKRFKKILIFISMRSQKPVCLKAT). Residues 379-401 (VVLDLSMPTMSIFLGMSYKFFCA) form a helical membrane-spanning segment. Residues 402–407 (VRTMYQ) are Extracellular-facing.

This sequence belongs to the insect chemoreceptor superfamily. Heteromeric odorant receptor channel (TC 1.A.69) family. Or49a subfamily. In terms of assembly, interacts with Orco. Complexes exist early in the endomembrane system in olfactory sensory neurons (OSNs), coupling these complexes to the conserved ciliary trafficking pathway. As to expression, expressed in olfactory sensory neurons in the antenna.

The protein resides in the cell membrane. In terms of biological role, odorant receptor which mediates acceptance or avoidance behavior, depending on its substrates. The odorant receptor repertoire encodes a large collection of odor stimuli that vary widely in identity, intensity, and duration. Forms a complex with Orco to form odorant-sensing units, providing sensitive and prolonged odorant signaling and calcium permeability. Involved in the behavioral responses to benzaldehyde and acetophenone. This is Odorant receptor 67a (Or67a) from Drosophila melanogaster (Fruit fly).